We begin with the raw amino-acid sequence, 399 residues long: Elongation factor Tu 1 (399 aa).

Residues 10–209 form the tr-type G domain; the sequence is KPHVNIGTIG…QVDTYIPEPE (200 aa). The segment at 19–26 is G1; sequence GHVDHGKT. 19–26 provides a ligand contact to GTP; it reads GHVDHGKT. T26 serves as a coordination point for Mg(2+). A G2 region spans residues 60–64; sequence GITIA. The tract at residues 81-84 is G3; that stretch reads DCPG. GTP-binding positions include 81-85 and 136-139; these read DCPGH and NKAD. Residues 136 to 139 form a G4 region; the sequence is NKAD. The G5 stretch occupies residues 174 to 176; that stretch reads SAL.

Belongs to the TRAFAC class translation factor GTPase superfamily. Classic translation factor GTPase family. EF-Tu/EF-1A subfamily. In terms of assembly, monomer.

Its subcellular location is the cytoplasm. The catalysed reaction is GTP + H2O = GDP + phosphate + H(+). In terms of biological role, GTP hydrolase that promotes the GTP-dependent binding of aminoacyl-tRNA to the A-site of ribosomes during protein biosynthesis. The sequence is that of Elongation factor Tu 1 from Syntrophotalea carbinolica (strain DSM 2380 / NBRC 103641 / GraBd1) (Pelobacter carbinolicus).